Here is a 431-residue protein sequence, read N- to C-terminus: MTVKTEAAKGTLTYSRMRGMVAILIAFMKQRRMGLNDFIQKIANNSYACKHPEVQSILKISQPQEPELMNANPSPPPSPSQQINLGPSSNPHAKPSDFHFLKVIGKGSFGKVLLARHKAEEVFYAVKVLQKKAILKKKEEKHIMSERNVLLKNVKHPFLVGLHFSFQTADKLYFVLDYINGGELFYHLQRERCFLEPRARFYAAEIASALGYLHSLNIVYRDLKPENILLDSQGHIVLTDFGLCKENIEHNSTTSTFCGTPEYLAPEVLHKQPYDRTVDWWCLGAVLYEMLYGLPPFYSRNTAEMYDNILNKPLQLKPNITNSARHLLEGLLQKDRTKRLGAKDDFMEIKSHVFFSLINWDDLINKKITPPFNPNVSGPNDLRHFDPEFTEEPVPNSIGKSPDSVLVTASVKEAAEAFLGFSYAPPTDSFL.

The tract at residues Met-1 to Ile-60 is necessary for localization to the mitochondria. Positions Pro-66–His-92 are disordered. Ser-74 is subject to Phosphoserine. Position 78 is a phosphoserine; by MAPK7 (Ser-78). The span at Gln-81 to Pro-91 shows a compositional bias: polar residues. One can recognise a Protein kinase domain in the interval Phe-98–Phe-355. ATP-binding positions include Ile-104–Val-112 and Lys-127. Residues Lys-131–Lys-141 carry the Nuclear localization signal motif. Asp-222 functions as the Proton acceptor in the catalytic mechanism. A Phosphothreonine; by PDPK1 modification is found at Thr-256. The 76-residue stretch at Ser-356–Leu-431 folds into the AGC-kinase C-terminal domain. Thr-369 is subject to Phosphothreonine; by PKA. Phosphoserine occurs at positions 397, 401, and 422.

The protein belongs to the protein kinase superfamily. AGC Ser/Thr protein kinase family. Homodimer; disulfide-linked. Forms a trimeric complex with FBXW7 and NOTCH1. Interacts with MAPK3/ERK1, MAPK1/ERK2, MAP2K1/MEK1, MAP2K2/MEK2, NEDD4, NEDD4L, MAPT/TAU, MAPK7, CREB1, SLC9A3R2/NHERF2 and KCNJ1/ROMK1. Associates with the mammalian target of rapamycin complex 2 (mTORC2) via an interaction with MAPKAP1/SIN1. Post-translationally, regulated by phosphorylation. Activated by phosphorylation on Ser-422 by mTORC2, transforming it into a substrate for PDPK1 which phosphorylates it on Thr-256. Phosphorylation on Ser-397 and Ser-401 are also essential for its activity. Phosphorylation on Ser-78 by MAPK7 is required for growth factor-induced cell cycle progression. Ubiquitinated by NEDD4L; which promotes proteasomal degradation. Ubiquitinated by SYVN1 at the endoplasmic reticulum; which promotes rapid proteasomal degradation and maintains a high turnover rate in resting cells. Isoform 2 shows enhanced stability. Expressed in most tissues with highest levels in the pancreas, followed by placenta, kidney and lung. Isoform 2 is strongly expressed in brain and pancreas, weaker in heart, placenta, lung, liver and skeletal muscle.

The protein localises to the cytoplasm. It is found in the nucleus. The protein resides in the endoplasmic reticulum membrane. Its subcellular location is the cell membrane. It localises to the mitochondrion. It carries out the reaction L-seryl-[protein] + ATP = O-phospho-L-seryl-[protein] + ADP + H(+). It catalyses the reaction L-threonyl-[protein] + ATP = O-phospho-L-threonyl-[protein] + ADP + H(+). Two specific sites, one in the kinase domain (Thr-256) and the other in the C-terminal regulatory region (Ser-422), need to be phosphorylated for its full activation. Phosphorylation at Ser-397 and Ser-401 are also essential for its activity. Activated by WNK1, WNK2, WNK3 and WNK4; which promote phosphorylation by mTORC2. Serine/threonine-protein kinase which is involved in the regulation of a wide variety of ion channels, membrane transporters, cellular enzymes, transcription factors, neuronal excitability, cell growth, proliferation, survival, migration and apoptosis. Plays an important role in cellular stress response. Contributes to regulation of renal Na(+) retention, renal K(+) elimination, salt appetite, gastric acid secretion, intestinal Na(+)/H(+) exchange and nutrient transport, insulin-dependent salt sensitivity of blood pressure, salt sensitivity of peripheral glucose uptake, cardiac repolarization and memory consolidation. Up-regulates Na(+) channels: SCNN1A/ENAC, SCN5A and ASIC1/ACCN2, K(+) channels: KCNJ1/ROMK1, KCNA1-5, KCNQ1-5 and KCNE1, epithelial Ca(2+) channels: TRPV5 and TRPV6, chloride channels: BSND, CLCN2 and CFTR, glutamate transporters: SLC1A3/EAAT1, SLC1A2 /EAAT2, SLC1A1/EAAT3, SLC1A6/EAAT4 and SLC1A7/EAAT5, amino acid transporters: SLC1A5/ASCT2, SLC38A1/SN1 and SLC6A19, creatine transporter: SLC6A8, Na(+)/dicarboxylate cotransporter: SLC13A2/NADC1, Na(+)-dependent phosphate cotransporter: SLC34A2/NAPI-2B, glutamate receptor: GRIK2/GLUR6. Up-regulates carriers: SLC9A3/NHE3, SLC12A1/NKCC2, SLC12A3/NCC, SLC5A3/SMIT, SLC2A1/GLUT1, SLC5A1/SGLT1 and SLC15A2/PEPT2. Regulates enzymes: GSK3A/B, PMM2 and Na(+)/K(+) ATPase, and transcription factors: CTNNB1 and nuclear factor NF-kappa-B. Stimulates sodium transport into epithelial cells by enhancing the stability and expression of SCNN1A/ENAC. This is achieved by phosphorylating the NEDD4L ubiquitin E3 ligase, promoting its interaction with 14-3-3 proteins, thereby preventing it from binding to SCNN1A/ENAC and targeting it for degradation. Regulates store-operated Ca(+2) entry (SOCE) by stimulating ORAI1 and STIM1. Regulates KCNJ1/ROMK1 directly via its phosphorylation or indirectly via increased interaction with SLC9A3R2/NHERF2. Phosphorylates MDM2 and activates MDM2-dependent ubiquitination of p53/TP53. Phosphorylates MAPT/TAU and mediates microtubule depolymerization and neurite formation in hippocampal neurons. Phosphorylates SLC2A4/GLUT4 and up-regulates its activity. Phosphorylates APBB1/FE65 and promotes its localization to the nucleus. Phosphorylates MAPK1/ERK2 and activates it by enhancing its interaction with MAP2K1/MEK1 and MAP2K2/MEK2. Phosphorylates FBXW7 and plays an inhibitory role in the NOTCH1 signaling. Phosphorylates FOXO1 resulting in its relocalization from the nucleus to the cytoplasm. Phosphorylates FOXO3, promoting its exit from the nucleus and interference with FOXO3-dependent transcription. Phosphorylates BRAF and MAP3K3/MEKK3 and inhibits their activity. Phosphorylates SLC9A3/NHE3 in response to dexamethasone, resulting in its activation and increased localization at the cell membrane. Phosphorylates CREB1. Necessary for vascular remodeling during angiogenesis. Sustained high levels and activity may contribute to conditions such as hypertension and diabetic nephropathy. Isoform 2 exhibited a greater effect on cell plasma membrane expression of SCNN1A/ENAC and Na(+) transport than isoform 1. The sequence is that of Serine/threonine-protein kinase Sgk1 (SGK1) from Homo sapiens (Human).